A 464-amino-acid polypeptide reads, in one-letter code: Argininosuccinate lyase (464 aa).

It belongs to the lyase 1 family. Argininosuccinate lyase subfamily.

It is found in the cytoplasm. It catalyses the reaction 2-(N(omega)-L-arginino)succinate = fumarate + L-arginine. It participates in amino-acid biosynthesis; L-arginine biosynthesis; L-arginine from L-ornithine and carbamoyl phosphate: step 3/3. The protein is Argininosuccinate lyase of Crocosphaera subtropica (strain ATCC 51142 / BH68) (Cyanothece sp. (strain ATCC 51142)).